The following is a 501-amino-acid chain: Glucans biosynthesis protein G (501 aa).

An N-terminal signal peptide occupies residues 1–24 (MNRRQVLAALAAIPLLPEAFPANA).

Belongs to the OpgD/OpgG family.

It localises to the periplasm. The protein operates within glycan metabolism; osmoregulated periplasmic glucan (OPG) biosynthesis. Its function is as follows. Involved in the biosynthesis of osmoregulated periplasmic glucans (OPGs). The chain is Glucans biosynthesis protein G from Rhodopseudomonas palustris (strain BisA53).